A 237-amino-acid polypeptide reads, in one-letter code: Uridylate kinase (237 aa).

An ATP-binding site is contributed by 11–14 (KLSG). G53 is a binding site for UMP. 2 residues coordinate ATP: G54 and R58. Residues D73 and 134 to 141 (TGNPFFTT) contribute to the UMP site. The ATP site is built by T161, Y167, and D170.

This sequence belongs to the UMP kinase family. Homohexamer.

It localises to the cytoplasm. The enzyme catalyses UMP + ATP = UDP + ADP. It functions in the pathway pyrimidine metabolism; CTP biosynthesis via de novo pathway; UDP from UMP (UMPK route): step 1/1. Its activity is regulated as follows. Inhibited by UTP. Its function is as follows. Catalyzes the reversible phosphorylation of UMP to UDP. The polypeptide is Uridylate kinase (Nitrosomonas eutropha (strain DSM 101675 / C91 / Nm57)).